We begin with the raw amino-acid sequence, 317 residues long: Ribose-phosphate pyrophosphokinase (317 aa).

Residues 43-45 (DGE) and 102-103 (RQ) contribute to the ATP site. Positions 136 and 175 each coordinate Mg(2+). The active site involves Lys198. D-ribose 5-phosphate-binding positions include Arg200, Asp224, and 228 to 232 (DTAGT).

Belongs to the ribose-phosphate pyrophosphokinase family. Class I subfamily. In terms of assembly, homohexamer. The cofactor is Mg(2+).

The protein resides in the cytoplasm. It carries out the reaction D-ribose 5-phosphate + ATP = 5-phospho-alpha-D-ribose 1-diphosphate + AMP + H(+). The protein operates within metabolic intermediate biosynthesis; 5-phospho-alpha-D-ribose 1-diphosphate biosynthesis; 5-phospho-alpha-D-ribose 1-diphosphate from D-ribose 5-phosphate (route I): step 1/1. Its function is as follows. Involved in the biosynthesis of the central metabolite phospho-alpha-D-ribosyl-1-pyrophosphate (PRPP) via the transfer of pyrophosphoryl group from ATP to 1-hydroxyl of ribose-5-phosphate (Rib-5-P). The polypeptide is Ribose-phosphate pyrophosphokinase (Oceanobacillus iheyensis (strain DSM 14371 / CIP 107618 / JCM 11309 / KCTC 3954 / HTE831)).